The chain runs to 441 residues: Proline--tRNA ligase (441 aa).

The protein belongs to the class-II aminoacyl-tRNA synthetase family. ProS type 2 subfamily. Homodimer.

The protein resides in the cytoplasm. The catalysed reaction is tRNA(Pro) + L-proline + ATP = L-prolyl-tRNA(Pro) + AMP + diphosphate. In terms of biological role, catalyzes the attachment of proline to tRNA(Pro) in a two-step reaction: proline is first activated by ATP to form Pro-AMP and then transferred to the acceptor end of tRNA(Pro). In Bartonella henselae (strain ATCC 49882 / DSM 28221 / CCUG 30454 / Houston 1) (Rochalimaea henselae), this protein is Proline--tRNA ligase.